The following is a 563-amino-acid chain: 4-hydroxy-7-methoxy-3-oxo-3,4-dihydro-2H-1,4-benzoxazin-2-yl glucoside beta-D-glucosidase 2, chloroplastic (563 aa).

The transit peptide at 1–51 (MAPLLAAAMNHAAHPVLRSHLGPNNESFSRHHLSSSPQSSKRRFNLSFTPR) directs the protein to the chloroplast. The tract at residues 17 to 43 (LRSHLGPNNESFSRHHLSSSPQSSKRR) is disordered. A beta-D-glucoside-binding positions include Gln-89, His-193, and 241 to 242 (NE). Glu-242 (proton donor) is an active-site residue. Cys-261 and Cys-267 are joined by a disulfide. The dimerization stretch occupies residues 322–358 (SFLDEQAKERSMDINLGWFLEPVVRGDYPFSMRSLAR). Position 384 (Tyr-384) interacts with a beta-D-glucoside. Dimerization regions lie at residues 391–402 (HIDISPKYSPVL) and 447–450 (KYGN). A beta-D-glucoside contacts are provided by residues Glu-457, Trp-508, 515-516 (EW), and Tyr-524. Glu-457 (nucleophile) is an active-site residue.

This sequence belongs to the glycosyl hydrolase 1 family. Homo- and heterodimer. Expressed in leaves only starting at day 6 after germination.

It localises to the plastid. Its subcellular location is the chloroplast. The catalysed reaction is Hydrolysis of terminal, non-reducing beta-D-glucosyl residues with release of beta-D-glucose.. The enzyme catalyses DIMBOA beta-D-glucoside + H2O = DIMBOA + D-glucose. It carries out the reaction DIBOA beta-D-glucoside + H2O = DIBOA + D-glucose. In terms of biological role, beta-glucosidase acting poorly on artificial aryl beta-glucosides. Has no activity toward the chromogenic substrate 6-bromo-2-naphthyl-beta-D-glucoside (6BNGlc). This Zea mays (Maize) protein is 4-hydroxy-7-methoxy-3-oxo-3,4-dihydro-2H-1,4-benzoxazin-2-yl glucoside beta-D-glucosidase 2, chloroplastic (GLU2).